We begin with the raw amino-acid sequence, 132 residues long: L-ectoine synthase (132 aa).

The protein belongs to the ectoine synthase family.

It catalyses the reaction (2S)-4-acetamido-2-aminobutanoate = L-ectoine + H2O. Its pathway is amine and polyamine biosynthesis; ectoine biosynthesis; L-ectoine from L-aspartate 4-semialdehyde: step 3/3. Functionally, catalyzes the circularization of gamma-N-acetyl-alpha,gamma-diaminobutyric acid (ADABA) to ectoine (1,4,5,6-tetrahydro-2-methyl-4-pyrimidine carboxylic acid), which is an excellent osmoprotectant. The protein is L-ectoine synthase of Teredinibacter turnerae (strain ATCC 39867 / T7901).